A 205-amino-acid polypeptide reads, in one-letter code: NADH dehydrogenase (205 aa).

FMN is bound by residues 17 to 21, Q73, 158 to 159, and R195; these read RRSIR and LG.

It belongs to the nitroreductase family. In terms of assembly, homodimer. FMN serves as cofactor.

It carries out the reaction a ubiquinone + NADH + 5 H(+)(in) = a ubiquinol + NAD(+) + 4 H(+)(out). In terms of biological role, can oxidize either NADH or NADPH with a preference for NADH. Can catalyze electron transfer from NADH to various electron acceptors which include, in addition to molecular oxygen, cytochrome c, 2,6 dichlorphenolindophenol, methylene blue, ferricyanide or P-nitroblue tetrazolium. The polypeptide is NADH dehydrogenase (nox) (Thermus thermophilus (strain ATCC 27634 / DSM 579 / HB8)).